The following is a 227-amino-acid chain: Phosphoribosylformylglycinamidine synthase subunit PurQ (227 aa).

In terms of domain architecture, Glutamine amidotransferase type-1 spans 3–225 (FAVIVFPGSN…LKQWRETYVV (223 aa)). Cys86 (nucleophile) is an active-site residue. Active-site residues include His194 and Glu196.

As to quaternary structure, part of the FGAM synthase complex composed of 1 PurL, 1 PurQ and 2 PurS subunits.

It localises to the cytoplasm. It carries out the reaction N(2)-formyl-N(1)-(5-phospho-beta-D-ribosyl)glycinamide + L-glutamine + ATP + H2O = 2-formamido-N(1)-(5-O-phospho-beta-D-ribosyl)acetamidine + L-glutamate + ADP + phosphate + H(+). The enzyme catalyses L-glutamine + H2O = L-glutamate + NH4(+). It participates in purine metabolism; IMP biosynthesis via de novo pathway; 5-amino-1-(5-phospho-D-ribosyl)imidazole from N(2)-formyl-N(1)-(5-phospho-D-ribosyl)glycinamide: step 1/2. Functionally, part of the phosphoribosylformylglycinamidine synthase complex involved in the purines biosynthetic pathway. Catalyzes the ATP-dependent conversion of formylglycinamide ribonucleotide (FGAR) and glutamine to yield formylglycinamidine ribonucleotide (FGAM) and glutamate. The FGAM synthase complex is composed of three subunits. PurQ produces an ammonia molecule by converting glutamine to glutamate. PurL transfers the ammonia molecule to FGAR to form FGAM in an ATP-dependent manner. PurS interacts with PurQ and PurL and is thought to assist in the transfer of the ammonia molecule from PurQ to PurL. This is Phosphoribosylformylglycinamidine synthase subunit PurQ from Bacillus anthracis (strain A0248).